The primary structure comprises 110 residues: Holo-[acyl-carrier-protein] synthase (110 aa).

Residues Asp-8 and Glu-54 each coordinate Mg(2+).

This sequence belongs to the P-Pant transferase superfamily. AcpS family. Mg(2+) is required as a cofactor.

Its subcellular location is the cytoplasm. The enzyme catalyses apo-[ACP] + CoA = holo-[ACP] + adenosine 3',5'-bisphosphate + H(+). Its function is as follows. Transfers the 4'-phosphopantetheine moiety from coenzyme A to a Ser of acyl-carrier-protein. This chain is Holo-[acyl-carrier-protein] synthase, found in Mycoplasma mycoides subsp. mycoides SC (strain CCUG 32753 / NCTC 10114 / PG1).